Reading from the N-terminus, the 415-residue chain is 3-isopropylmalate dehydratase large subunit (415 aa).

The [4Fe-4S] cluster site is built by C297, C355, and C358.

It belongs to the aconitase/IPM isomerase family. LeuC type 2 subfamily. In terms of assembly, heterodimer of LeuC and LeuD. [4Fe-4S] cluster is required as a cofactor.

It carries out the reaction (2R,3S)-3-isopropylmalate = (2S)-2-isopropylmalate. It participates in amino-acid biosynthesis; L-leucine biosynthesis; L-leucine from 3-methyl-2-oxobutanoate: step 2/4. Functionally, catalyzes the isomerization between 2-isopropylmalate and 3-isopropylmalate, via the formation of 2-isopropylmaleate. This Sulfurisphaera tokodaii (strain DSM 16993 / JCM 10545 / NBRC 100140 / 7) (Sulfolobus tokodaii) protein is 3-isopropylmalate dehydratase large subunit.